Here is a 139-residue protein sequence, read N- to C-terminus: Nucleoside diphosphate kinase (139 aa).

Positions 11, 59, 87, 93, 104, and 114 each coordinate ATP. Histidine 117 (pros-phosphohistidine intermediate) is an active-site residue.

This sequence belongs to the NDK family. Homotetramer. Mg(2+) serves as cofactor.

It localises to the cytoplasm. The catalysed reaction is a 2'-deoxyribonucleoside 5'-diphosphate + ATP = a 2'-deoxyribonucleoside 5'-triphosphate + ADP. It catalyses the reaction a ribonucleoside 5'-diphosphate + ATP = a ribonucleoside 5'-triphosphate + ADP. Its function is as follows. Major role in the synthesis of nucleoside triphosphates other than ATP. The ATP gamma phosphate is transferred to the NDP beta phosphate via a ping-pong mechanism, using a phosphorylated active-site intermediate. The chain is Nucleoside diphosphate kinase from Wolbachia pipientis subsp. Culex pipiens (strain wPip).